The primary structure comprises 202 residues: Protein Mbar_A1807 (202 aa).

In terms of domain architecture, AMMECR1 spans 5-196 (VEGRAAVKLA…EKEPCGEVLE (192 aa)).

The chain is Protein Mbar_A1807 from Methanosarcina barkeri (strain Fusaro / DSM 804).